Consider the following 606-residue polypeptide: Diphthine--ammonia ligase (606 aa).

In the N-terminal section; belongs to the Diphthine--ammonia ligase family. This sequence in the C-terminal section; belongs to the RutC family.

The protein resides in the cytoplasm. It is found in the nucleus. It carries out the reaction diphthine-[translation elongation factor 2] + NH4(+) + ATP = diphthamide-[translation elongation factor 2] + AMP + diphosphate + H(+). Its pathway is protein modification; peptidyl-diphthamide biosynthesis. Its function is as follows. Amidase that catalyzes the last step of diphthamide biosynthesis using ammonium and ATP. Diphthamide biosynthesis consists in the conversion of an L-histidine residue in the translation elongation factor eEF-2 (eft201 or eft202) to diphthamide. Has a role in meiosis. This is Diphthine--ammonia ligase (mug71) from Schizosaccharomyces pombe (strain 972 / ATCC 24843) (Fission yeast).